Reading from the N-terminus, the 76-residue chain is Small proline-rich protein 4 (76 aa).

Positions 38–76 (PKTKDPCVPQAKKQCPARSTTNPAQEKCPAQQDPKCKQK) are disordered.

This sequence belongs to the cornifin (SPRR) family. In terms of processing, cross-linked to membrane proteins by transglutaminase.

It localises to the cytoplasm. The protein resides in the cell cortex. Cross-linked envelope protein of keratinocytes. Involved in UV-induced cornification. This is Small proline-rich protein 4 (Sprr4) from Mus musculus (Mouse).